A 329-amino-acid polypeptide reads, in one-letter code: Probable nicotianamine synthase 4 (329 aa).

This sequence belongs to the nicotianamine synthase (NAS)-like family.

It carries out the reaction 3 S-adenosyl-L-methionine = nicotianamine + 3 S-methyl-5'-thioadenosine + 3 H(+). In terms of biological role, synthesizes nicotianamine, a polyamine that is the first intermediate in the synthesis of the phytosiderophores of the mugineic acid type found in gramineae which serves as a sensor for the physiological iron status within the plant, and/or might be involved in the transport of iron. This is Probable nicotianamine synthase 4 (NAS4) from Hordeum vulgare (Barley).